A 201-amino-acid chain; its full sequence is 3-isopropylmalate dehydratase small subunit (201 aa).

Belongs to the LeuD family. LeuD type 1 subfamily. As to quaternary structure, heterodimer of LeuC and LeuD.

The enzyme catalyses (2R,3S)-3-isopropylmalate = (2S)-2-isopropylmalate. The protein operates within amino-acid biosynthesis; L-leucine biosynthesis; L-leucine from 3-methyl-2-oxobutanoate: step 2/4. Functionally, catalyzes the isomerization between 2-isopropylmalate and 3-isopropylmalate, via the formation of 2-isopropylmaleate. This chain is 3-isopropylmalate dehydratase small subunit, found in Micrococcus luteus (strain ATCC 4698 / DSM 20030 / JCM 1464 / CCM 169 / CCUG 5858 / IAM 1056 / NBRC 3333 / NCIMB 9278 / NCTC 2665 / VKM Ac-2230) (Micrococcus lysodeikticus).